We begin with the raw amino-acid sequence, 371 residues long: L-lysine 4-hydroxylase (371 aa).

Fe cation-binding residues include His174, Glu176, and His310.

Belongs to the clavaminate synthase family. Requires Fe(2+) as cofactor.

It carries out the reaction L-lysine + 2-oxoglutarate + O2 = (4R)-4-hydroxy-L-lysine + succinate + CO2. Its function is as follows. Alpha-ketoglutarate-dependent dioxygenase that in vitro catalyzes the regio- and stereoselective hydroxylation of L-lysine, leading to (4R)-4-hydroxy-L-lysine. The chain is L-lysine 4-hydroxylase from Niastella koreensis (strain DSM 17620 / KACC 11465 / NBRC 106392 / GR20-10).